The chain runs to 336 residues: tRNA N6-adenosine threonylcarbamoyltransferase (336 aa).

Residues His-114 and His-118 each coordinate Fe cation. Substrate contacts are provided by residues 136–140 (LVSGG), Asp-169, Gly-182, Asp-186, and Asn-275. Asp-301 contacts Fe cation.

This sequence belongs to the KAE1 / TsaD family. The cofactor is Fe(2+).

It is found in the cytoplasm. The catalysed reaction is L-threonylcarbamoyladenylate + adenosine(37) in tRNA = N(6)-L-threonylcarbamoyladenosine(37) in tRNA + AMP + H(+). Its function is as follows. Required for the formation of a threonylcarbamoyl group on adenosine at position 37 (t(6)A37) in tRNAs that read codons beginning with adenine. Is involved in the transfer of the threonylcarbamoyl moiety of threonylcarbamoyl-AMP (TC-AMP) to the N6 group of A37, together with TsaE and TsaB. TsaD likely plays a direct catalytic role in this reaction. The protein is tRNA N6-adenosine threonylcarbamoyltransferase of Streptococcus pneumoniae (strain ATCC 700669 / Spain 23F-1).